Consider the following 444-residue polypeptide: Ribulose bisphosphate carboxylase large chain (444 aa).

Lysine 7 carries the post-translational modification N6,N6,N6-trimethyllysine. The substrate site is built by asparagine 116 and threonine 166. The Proton acceptor role is filled by lysine 168. Lysine 170 is a binding site for substrate. Lysine 194, aspartate 196, and glutamate 197 together coordinate Mg(2+). An N6-carboxylysine modification is found at lysine 194. Histidine 287 serves as the catalytic Proton acceptor. Arginine 288, histidine 320, and serine 372 together coordinate substrate.

The protein belongs to the RuBisCO large chain family. Type I subfamily. In terms of assembly, heterohexadecamer of 8 large chains and 8 small chains; disulfide-linked. The disulfide link is formed within the large subunit homodimers. It depends on Mg(2+) as a cofactor. The disulfide bond which can form in the large chain dimeric partners within the hexadecamer appears to be associated with oxidative stress and protein turnover.

The protein localises to the plastid. The protein resides in the chloroplast. It carries out the reaction 2 (2R)-3-phosphoglycerate + 2 H(+) = D-ribulose 1,5-bisphosphate + CO2 + H2O. It catalyses the reaction D-ribulose 1,5-bisphosphate + O2 = 2-phosphoglycolate + (2R)-3-phosphoglycerate + 2 H(+). RuBisCO catalyzes two reactions: the carboxylation of D-ribulose 1,5-bisphosphate, the primary event in carbon dioxide fixation, as well as the oxidative fragmentation of the pentose substrate in the photorespiration process. Both reactions occur simultaneously and in competition at the same active site. This chain is Ribulose bisphosphate carboxylase large chain, found in Watsonia angusta.